The sequence spans 120 residues: uncharacterized protein (120 aa).

It belongs to the asp23 family.

This is an uncharacterized protein from Bacillus subtilis (strain 168).